Reading from the N-terminus, the 101-residue chain is Small ribosomal subunit protein uS14 (101 aa).

It belongs to the universal ribosomal protein uS14 family. Part of the 30S ribosomal subunit. Contacts proteins S3 and S10.

Binds 16S rRNA, required for the assembly of 30S particles and may also be responsible for determining the conformation of the 16S rRNA at the A site. The polypeptide is Small ribosomal subunit protein uS14 (Bartonella quintana (strain Toulouse) (Rochalimaea quintana)).